The sequence spans 216 residues: 3-isopropylmalate dehydratase small subunit (216 aa).

The protein belongs to the LeuD family. LeuD type 1 subfamily. In terms of assembly, heterodimer of LeuC and LeuD.

It catalyses the reaction (2R,3S)-3-isopropylmalate = (2S)-2-isopropylmalate. Its pathway is amino-acid biosynthesis; L-leucine biosynthesis; L-leucine from 3-methyl-2-oxobutanoate: step 2/4. Catalyzes the isomerization between 2-isopropylmalate and 3-isopropylmalate, via the formation of 2-isopropylmaleate. This is 3-isopropylmalate dehydratase small subunit from Burkholderia ambifaria (strain MC40-6).